A 457-amino-acid chain; its full sequence is Multidrug resistance protein MdtK (457 aa).

Residues 1 to 10 (MQKYISEARL) lie on the Cytoplasmic side of the membrane. The helical transmembrane segment at 11 to 31 (LLALAIPVILAQIAQTAMGFV) threads the bilayer. At 32-52 (DTVMAGGYSATDMAAVAIGTS) the chain is on the periplasmic side. The chain crosses the membrane as a helical span at residues 53–73 (IWLPAILFGHGLLLALTPVIA). Topologically, residues 74–92 (QLNGSGRRERIAHQVRQGF) are cytoplasmic. A helical transmembrane segment spans residues 93–113 (WLAGFVSVLIMLVLWNAGYII). The Periplasmic segment spans residues 114–126 (RSMENIDPALADK). A helical transmembrane segment spans residues 127–147 (AVGYLRALLWGAPGYLFFQVA). At 148-159 (RNQCEGLAKTKP) the chain is on the cytoplasmic side. Residues 160–180 (GMVMGFIGLLVNIPVNYIFIY) traverse the membrane as a helical segment. Residues 181 to 188 (GHFGMPEL) lie on the Periplasmic side of the membrane. A helical transmembrane segment spans residues 189–209 (GGVGCGVATAAVYWVMFLAMV). Over 210-242 (SYIKRARSMRDIRNEKGTAKPDPAVMKRLIQLG) the chain is Cytoplasmic. Residues 243 to 263 (LPIALALFFEVTLFAVVALLV) form a helical membrane-spanning segment. The Periplasmic portion of the chain corresponds to 264–275 (SPLGIVDVAGHQ). Residues 276–296 (IALNFSSLMFVLPMSLAAAVT) form a helical membrane-spanning segment. At 297–313 (IRVGYRLGQGSTLDAQT) the chain is on the cytoplasmic side. A helical transmembrane segment spans residues 314 to 334 (AARTGLMVGVCMATLTAIFTV). The Periplasmic portion of the chain corresponds to 335–349 (SLREQIALLYNDNPE). Residues 350–370 (VVTLAAHLMLLAAVYQISDSI) form a helical membrane-spanning segment. The Cytoplasmic portion of the chain corresponds to 371–386 (QVIGSGILRGYKDTRS). Residues 387–407 (IFYITFTAYWVLGLPSGYILA) form a helical membrane-spanning segment. Topologically, residues 408–417 (LTDLVVEPMG) are periplasmic. The chain crosses the membrane as a helical span at residues 418–438 (PAGFWIGFIIGLTSAAIMMML). The Cytoplasmic segment spans residues 439 to 457 (RMRFLQRMPSAIILQRASR).

The protein belongs to the multi antimicrobial extrusion (MATE) (TC 2.A.66.1) family. MdtK subfamily.

The protein resides in the cell inner membrane. Functionally, multidrug efflux pump that functions probably as a Na(+)/drug antiporter. The sequence is that of Multidrug resistance protein MdtK from Shigella boydii serotype 4 (strain Sb227).